The following is a 339-amino-acid chain: Ornithine carbamoyltransferase, catabolic (339 aa).

Carbamoyl phosphate is bound by residues 57–60 (STRT), glutamine 84, arginine 108, and 135–138 (HPTQ). L-ornithine is bound by residues asparagine 167, aspartate 231, and 235-236 (SM). Residues 274-275 (CL) and arginine 319 contribute to the carbamoyl phosphate site.

The protein belongs to the aspartate/ornithine carbamoyltransferase superfamily. OTCase family.

The protein resides in the cytoplasm. It catalyses the reaction carbamoyl phosphate + L-ornithine = L-citrulline + phosphate + H(+). It participates in amino-acid degradation; L-arginine degradation via ADI pathway; carbamoyl phosphate from L-arginine: step 2/2. Its function is as follows. Reversibly catalyzes the transfer of the carbamoyl group from carbamoyl phosphate (CP) to the N(epsilon) atom of ornithine (ORN) to produce L-citrulline. The protein is Ornithine carbamoyltransferase, catabolic (arcB) of Enterococcus faecalis (strain ATCC 700802 / V583).